Here is a 499-residue protein sequence, read N- to C-terminus: Glycerol kinase (499 aa).

Position 12 (Thr12) interacts with ADP. The ATP site is built by Thr12, Thr13, and Ser14. A sn-glycerol 3-phosphate-binding site is contributed by Thr12. Residue Arg16 participates in ADP binding. 4 residues coordinate sn-glycerol 3-phosphate: Arg82, Glu83, Tyr134, and Asp245. Glycerol contacts are provided by Arg82, Glu83, Tyr134, Asp245, and Gln246. The ADP site is built by Thr267 and Gly311. Thr267, Gly311, Gln315, and Gly412 together coordinate ATP. Positions 412 and 416 each coordinate ADP.

Belongs to the FGGY kinase family.

It carries out the reaction glycerol + ATP = sn-glycerol 3-phosphate + ADP + H(+). It participates in polyol metabolism; glycerol degradation via glycerol kinase pathway; sn-glycerol 3-phosphate from glycerol: step 1/1. Its activity is regulated as follows. Inhibited by fructose 1,6-bisphosphate (FBP). Its function is as follows. Key enzyme in the regulation of glycerol uptake and metabolism. Catalyzes the phosphorylation of glycerol to yield sn-glycerol 3-phosphate. The protein is Glycerol kinase of Acidiphilium cryptum (strain JF-5).